We begin with the raw amino-acid sequence, 1064 residues long: Phosphatidylinositol 4,5-bisphosphate 3-kinase catalytic subunit beta isoform (1064 aa).

The PI3K-ABD domain maps to 20–109 (SDGAISVDFL…LPVLKLVTRS (90 aa)). The PI3K-RBD domain maps to 188 to 279 (GGKLVVAVHF…RTLPHFILVE (92 aa)). Position 318 is a phosphoserine (Ser-318). The C2 PI3K-type domain occupies 323-490 (NNNPFQITLV…NATALHITFP (168 aa)). The Nuclear localization signal (NLS) signature appears at 404-412 (KVKTKKSTK). The 178-residue stretch at 518–695 (ANVSSRGGKK…GVILEAYCRG (178 aa)) folds into the PIK helical domain. Positions 766-1047 (YVEKCKYMDS…KFDEALRESW (282 aa)) constitute a PI3K/PI4K catalytic domain. Positions 772–778 (YMDSKMK) are G-loop. The tract at residues 910 to 918 (GIGDRHSDN) is catalytic loop. An activation loop region spans residues 929 to 955 (HIDFGHILGNFKSKFGIKRERVPFILT). Ser-1064 is modified (phosphoserine; by autocatalysis).

The protein belongs to the PI3/PI4-kinase family. In terms of assembly, heterodimer of a catalytic subunit PIK3CB and a p85 regulatory subunit (PIK3R1, PIK3R2 or PIK3R3). Interaction with PIK3R2 is required for nuclear localization and nuclear export. Part of a complex with PIK3R1 and PTEN. Binding to PTEN may antagonize the lipid kinase activity under normal growth conditions. Part of a complex involved in autophagosome formation composed of PIK3C3 and PIK3R4. Interacts with BECN1, ATG14 and RAB5A. Post-translationally, phosphorylation at Ser-1064 down-regulates lipid kinase activity. Autophosphorylation at Ser-1064 negatively regulates the phosphatidylinositol-4,5-bisphosphate 3-kinase activity.

It is found in the cytoplasm. It localises to the nucleus. The enzyme catalyses a 1,2-diacyl-sn-glycero-3-phospho-(1D-myo-inositol-4,5-bisphosphate) + ATP = a 1,2-diacyl-sn-glycero-3-phospho-(1D-myo-inositol-3,4,5-trisphosphate) + ADP + H(+). It catalyses the reaction 1-octadecanoyl-2-(5Z,8Z,11Z,14Z)-eicosatetraenoyl-sn-glycero-3-phospho-1D-myo-inositol 4,5-bisphosphate + ATP = 1-octadecanoyl-2-(5Z,8Z,11Z,14Z-eicosatetraenoyl)-sn-glycero-3-phospho-(1D-myo-inositol 3,4,5-triphosphate) + ADP + H(+). It carries out the reaction L-seryl-[protein] + ATP = O-phospho-L-seryl-[protein] + ADP + H(+). It participates in phospholipid metabolism; phosphatidylinositol phosphate biosynthesis. In terms of biological role, phosphoinositide-3-kinase (PI3K) phosphorylates phosphatidylinositol (PI) derivatives at position 3 of the inositol ring to produce 3-phosphoinositides. Uses ATP and PtdIns(4,5)P2 (phosphatidylinositol 4,5-bisphosphate) to generate phosphatidylinositol 3,4,5-trisphosphate (PIP3). PIP3 plays a key role by recruiting PH domain-containing proteins to the membrane, including AKT1 and PDPK1, activating signaling cascades involved in cell growth, survival, proliferation, motility and morphology. Involved in the activation of AKT1 upon stimulation by G-protein coupled receptors (GPCRs) ligands such as CXCL12, sphingosine 1-phosphate, and lysophosphatidic acid. May also act downstream receptor tyrosine kinases. Required in different signaling pathways for stable platelet adhesion and aggregation. Plays a role in platelet activation signaling triggered by GPCRs, alpha-IIb/beta-3 integrins (ITGA2B/ ITGB3) and ITAM (immunoreceptor tyrosine-based activation motif)-bearing receptors such as GP6. Regulates the strength of adhesion of ITGA2B/ ITGB3 activated receptors necessary for the cellular transmission of contractile forces. Required for platelet aggregation induced by F2 (thrombin) and thromboxane A2 (TXA2). Has a role in cell survival. May have a role in cell migration. Involved in the early stage of autophagosome formation. Modulates the intracellular level of PtdIns3P (phosphatidylinositol 3-phosphate) and activates PIK3C3 kinase activity. May act as a scaffold, independently of its lipid kinase activity to positively regulate autophagy. May have a role in insulin signaling as scaffolding protein in which the lipid kinase activity is not required. May have a kinase-independent function in regulating cell proliferation and in clathrin-mediated endocytosis. Mediator of oncogenic signal in cell lines lacking PTEN. The lipid kinase activity is necessary for its role in oncogenic transformation. Required for the growth of ERBB2 and RAS driven tumors. Also has a protein kinase activity showing autophosphorylation. This is Phosphatidylinositol 4,5-bisphosphate 3-kinase catalytic subunit beta isoform (Pik3cb) from Mus musculus (Mouse).